The primary structure comprises 201 residues: Small ribosomal subunit protein uS4c (201 aa).

Positions 20–44 are disordered; that stretch reads GLTSKRPRAGSDLRNQSRSGKKSQY. One can recognise an S4 RNA-binding domain in the interval 89–152; the sequence is MRLDNTLFRL…NSRTLVQNLL (64 aa).

It belongs to the universal ribosomal protein uS4 family. As to quaternary structure, part of the 30S ribosomal subunit. Contacts protein S5. The interaction surface between S4 and S5 is involved in control of translational fidelity.

It is found in the plastid. Its subcellular location is the chloroplast. In terms of biological role, one of the primary rRNA binding proteins, it binds directly to 16S rRNA where it nucleates assembly of the body of the 30S subunit. With S5 and S12 plays an important role in translational accuracy. This chain is Small ribosomal subunit protein uS4c (rps4), found in Aethionema grandiflorum (Persian stone-cress).